The primary structure comprises 621 residues: uncharacterized protein (621 aa).

The signal sequence occupies residues 1–15 (MRRSVCYVTPSVARA).

Belongs to the chlamydial CPn_0512/CT_425/TC_0708 family.

This is an uncharacterized protein from Chlamydia trachomatis serovar D (strain ATCC VR-885 / DSM 19411 / UW-3/Cx).